We begin with the raw amino-acid sequence, 133 residues long: Ribonucleases P/MRP protein subunit POP8 (133 aa).

Component of nuclear RNase P and RNase MRP complexes. RNase P consists of an RNA moiety and at least 9 protein subunits including POP1, POP3, POP4, POP5, POP6, POP7, POP8, RPP1 and RPR2. RNase MRP complex consists of an RNA moiety and at least 10 protein subunits including POP1, POP3, POP4, POP5, POP6, POP7, POP8, RMP1, RPP1 and SNM1, many of which are shared with the RNase P complex.

The protein resides in the nucleus. It carries out the reaction Endonucleolytic cleavage of RNA, removing 5'-extranucleotides from tRNA precursor.. In terms of biological role, component of ribonuclease P, a protein complex that generates mature tRNA molecules by cleaving their 5'-ends. Also a component of RNase MRP, which cleaves pre-rRNA sequences. This chain is Ribonucleases P/MRP protein subunit POP8 (POP8), found in Saccharomyces cerevisiae (strain ATCC 204508 / S288c) (Baker's yeast).